The sequence spans 343 residues: Palmitoyltransferase ZDHHC4 (343 aa).

Topologically, residues 1–2 are lumenal; that stretch reads MD. Residues 3 to 23 traverse the membrane as a helical segment; the sequence is FLVLFLLYLALVLLGFVMICI. Residues 24–67 lie on the Cytoplasmic side of the membrane; the sequence is GSKTHYLQGLISRGAQVFSYIIPECLQRAMLSVLHYLFHTRNYT. A helical membrane pass occupies residues 68–88; it reads FVVLHLILQGMVYTEYTWEIF. The Lumenal portion of the chain corresponds to 89 to 95; sequence GLCQQLE. The helical transmembrane segment at 96 to 116 threads the bilayer; it reads FSLYYLFLPYLLLIVNLLFFT. At 117–196 the chain is on the cytoplasmic side; that stretch reads LSCVTNPGTI…GAWNTRYFLS (80 aa). Residues 149–199 enclose the DHHC domain; sequence VRCPTCDLRKPARSKHCSVCNRCVHRFDHHCVWVNNCIGAWNTRYFLSYLF. Catalysis depends on C179, which acts as the S-palmitoyl cysteine intermediate. Residues 197–217 form a helical membrane-spanning segment; the sequence is YLFTLTASAATMAVVSTVFLV. Topologically, residues 218 to 255 are lumenal; sequence RLVVMSDVYLQTYVDDLGHLQVVDTVFLVQYLFLTFPR. The helical transmembrane segment at 256-276 threads the bilayer; the sequence is IVFLVGFVVVLSFLLGGYLCF. Residues 277–343 are Cytoplasmic-facing; that stretch reads CLYLAATNQT…ATACYERKEK (67 aa). A Di-lysine motif motif is present at residues 340–343; sequence RKEK.

Belongs to the DHHC palmitoyltransferase family. Interacts with CPT1A.

The protein resides in the endoplasmic reticulum membrane. It is found in the golgi apparatus membrane. Its subcellular location is the cell membrane. The catalysed reaction is L-cysteinyl-[protein] + hexadecanoyl-CoA = S-hexadecanoyl-L-cysteinyl-[protein] + CoA. Its function is as follows. Palmitoyltransferase that could catalyze the addition of palmitate onto protein substrates including the D(2) dopamine receptor DRD2, GSK3B or MAVS. Mediates GSK3B palmitoylation to prevent its AKT1-mediated phosphorylation leading to activation of the STAT3 signaling pathway. Also catalyzes MAVS palmitoylation which promotes its stabilization and activation by inhibiting 'Lys-48'- but facilitating 'Lys-63'-linked ubiquitination. The sequence is that of Palmitoyltransferase ZDHHC4 from Bos taurus (Bovine).